A 418-amino-acid chain; its full sequence is UDP-N-acetylglucosamine 1-carboxyvinyltransferase (418 aa).

Residue 22-23 participates in phosphoenolpyruvate binding; that stretch reads KN. R92 contacts UDP-N-acetyl-alpha-D-glucosamine. Catalysis depends on C116, which acts as the Proton donor. C116 carries the 2-(S-cysteinyl)pyruvic acid O-phosphothioketal modification. Residues 121 to 125, D305, and L327 contribute to the UDP-N-acetyl-alpha-D-glucosamine site; that span reads RPIDL.

It belongs to the EPSP synthase family. MurA subfamily.

Its subcellular location is the cytoplasm. It carries out the reaction phosphoenolpyruvate + UDP-N-acetyl-alpha-D-glucosamine = UDP-N-acetyl-3-O-(1-carboxyvinyl)-alpha-D-glucosamine + phosphate. The protein operates within cell wall biogenesis; peptidoglycan biosynthesis. Its function is as follows. Cell wall formation. Adds enolpyruvyl to UDP-N-acetylglucosamine. The protein is UDP-N-acetylglucosamine 1-carboxyvinyltransferase of Campylobacter jejuni subsp. doylei (strain ATCC BAA-1458 / RM4099 / 269.97).